The following is a 680-amino-acid chain: Structure-specific endonuclease subunit SLX4 (680 aa).

Disordered stretches follow at residues 15–92, 141–183, and 450–490; these read EVAK…EPVV, ESSS…STQQ, and LGSG…ATRL. The span at 22–33 shows a compositional bias: acidic residues; it reads DSDEPIIDEDDL. Positions 60 to 86 are enriched in basic and acidic residues; sequence NNSKDTFKETPLELVDKEEAIEDKAPN. Over residues 156–174 the composition is skewed to basic residues; sequence LKSKKITKPKLTKTSKRTK. Residues 473–490 are compositionally biased toward polar residues; it reads TVISRSPQSTRTPQATRL.

Belongs to the SLX4 family. As to quaternary structure, forms a heterodimer with SLX1. Phosphorylated in response to DNA damage.

Its subcellular location is the nucleus. Functionally, regulatory subunit of the SLX1-SLX4 structure-specific endonuclease that resolves DNA secondary structures generated during DNA repair and recombination. Has endonuclease activity towards branched DNA substrates, introducing single-strand cuts in duplex DNA close to junctions with ss-DNA. The chain is Structure-specific endonuclease subunit SLX4 from Vanderwaltozyma polyspora (strain ATCC 22028 / DSM 70294 / BCRC 21397 / CBS 2163 / NBRC 10782 / NRRL Y-8283 / UCD 57-17) (Kluyveromyces polysporus).